We begin with the raw amino-acid sequence, 328 residues long: Biotin synthase (328 aa).

One can recognise a Radical SAM core domain in the interval 48–277 (FVGNEVHLCS…GKRITVCGGR (230 aa)). Residues Cys-66, Cys-70, and Cys-73 each contribute to the [4Fe-4S] cluster site. Ser-142 and Cys-202 together coordinate [2Fe-2S] cluster.

Belongs to the radical SAM superfamily. Biotin synthase family. As to quaternary structure, homodimer. The cofactor is [4Fe-4S] cluster. [2Fe-2S] cluster is required as a cofactor.

The catalysed reaction is (4R,5S)-dethiobiotin + (sulfur carrier)-SH + 2 reduced [2Fe-2S]-[ferredoxin] + 2 S-adenosyl-L-methionine = (sulfur carrier)-H + biotin + 2 5'-deoxyadenosine + 2 L-methionine + 2 oxidized [2Fe-2S]-[ferredoxin]. The protein operates within cofactor biosynthesis; biotin biosynthesis; biotin from 7,8-diaminononanoate: step 2/2. In terms of biological role, catalyzes the conversion of dethiobiotin (DTB) to biotin by the insertion of a sulfur atom into dethiobiotin via a radical-based mechanism. This chain is Biotin synthase, found in Citrifermentans bemidjiense (strain ATCC BAA-1014 / DSM 16622 / JCM 12645 / Bem) (Geobacter bemidjiensis).